Consider the following 322-residue polypeptide: Reticulocalbin-1 (322 aa).

Positions 1-19 are cleaved as a signal peptide; it reads MDVLGFICAVFLGTVVLHA. Residue Asn44 is glycosylated (N-linked (GlcNAc...) asparagine). EF-hand domains are found at residues 70–105, 106–141, 157–192, 194–229, 235–270, and 271–306; these read ESKD…VQKR, YVYE…YYLS, KMLP…EEFE, MKDI…HEDR, WVKT…QDYD, and HAQA…FVGS. Positions 83, 85, 87, 89, 94, 119, 121, 123, 125, 130, 170, 172, 174, 181, 207, 209, 211, 213, 218, 248, 250, 252, 254, 259, 284, 286, 288, 290, and 295 each coordinate Ca(2+). Positions 319–322 match the Prevents secretion from ER motif; sequence HDEL.

It belongs to the CREC family.

The protein resides in the endoplasmic reticulum lumen. Functionally, may regulate calcium-dependent activities in the endoplasmic reticulum lumen or post-ER compartment. The chain is Reticulocalbin-1 (rcn1) from Takifugu rubripes (Japanese pufferfish).